The sequence spans 210 residues: MGQVFLLMPVLLVSCFLSQGAAIENQRLFNIAVSRVQHLHLLAQKMFNDFDGTLLPDERRQLNKIFLLDFCNSDSIVSPVDKHETQKSSVLKLLHISFRLIESWEYPSQTLIISNSLMVRNANQISEKLSDLKVGINLLITGSQDGVLSLDDNDSQQLPPYGNYYQNLGGDGNVRRNYELLACFKKDMHKVETYLTVAKCRKSLEANCTL.

The signal sequence occupies residues 1–22 (MGQVFLLMPVLLVSCFLSQGAA). His-38 provides a ligand contact to Zn(2+). Cys-71 and Cys-183 are disulfide-bonded. Glu-192 contributes to the Zn(2+) binding site. Cysteines 200 and 208 form a disulfide.

It belongs to the somatotropin/prolactin family.

It is found in the secreted. Growth hormone plays an important role in growth control and is involved in the regulation of several anabolic processes. Implicated as an osmoregulatory substance important for seawater adaptation. The chain is Somatotropin (gh) from Oncorhynchus keta (Chum salmon).